Here is an 87-residue protein sequence, read N- to C-terminus: Small ribosomal subunit protein bS20 (87 aa).

A disordered region spans residues 1–25; sequence MANIKSAKKRAVQSEKRRKHNASRR.

This sequence belongs to the bacterial ribosomal protein bS20 family.

Binds directly to 16S ribosomal RNA. The protein is Small ribosomal subunit protein bS20 of Yersinia pseudotuberculosis serotype O:1b (strain IP 31758).